A 228-amino-acid chain; its full sequence is Ribose-5-phosphate isomerase A (228 aa).

Substrate-binding positions include 29-32, 85-88, and 98-101; these read TGST, DGAD, and KGGG. Catalysis depends on Glu-107, which acts as the Proton acceptor. Lys-125 contacts substrate.

It belongs to the ribose 5-phosphate isomerase family. Homodimer.

It carries out the reaction aldehydo-D-ribose 5-phosphate = D-ribulose 5-phosphate. It functions in the pathway carbohydrate degradation; pentose phosphate pathway; D-ribose 5-phosphate from D-ribulose 5-phosphate (non-oxidative stage): step 1/1. Its function is as follows. Catalyzes the reversible conversion of ribose-5-phosphate to ribulose 5-phosphate. The sequence is that of Ribose-5-phosphate isomerase A from Staphylococcus aureus (strain Mu50 / ATCC 700699).